Here is a 208-residue protein sequence, read N- to C-terminus: Thymidylate kinase (208 aa).

10 to 17 lines the ATP pocket; the sequence is GPEGSGKT.

This sequence belongs to the thymidylate kinase family.

It carries out the reaction dTMP + ATP = dTDP + ADP. Functionally, phosphorylation of dTMP to form dTDP in both de novo and salvage pathways of dTTP synthesis. This chain is Thymidylate kinase, found in Bacillus cereus (strain ATCC 10987 / NRS 248).